The chain runs to 310 residues: Acetyl-coenzyme A carboxylase carboxyl transferase subunit alpha (310 aa).

A CoA carboxyltransferase C-terminal domain is found at Ser-31 to Gln-285.

Belongs to the AccA family. As to quaternary structure, acetyl-CoA carboxylase is a heterohexamer composed of biotin carboxyl carrier protein (accB), biotin carboxylase (accC) and two subunits each of ACCase subunit alpha (accA) and ACCase subunit beta (accD).

It is found in the plastid. It localises to the chloroplast. It carries out the reaction N(6)-carboxybiotinyl-L-lysyl-[protein] + acetyl-CoA = N(6)-biotinyl-L-lysyl-[protein] + malonyl-CoA. It functions in the pathway lipid metabolism; malonyl-CoA biosynthesis; malonyl-CoA from acetyl-CoA: step 1/1. In terms of biological role, component of the acetyl coenzyme A carboxylase (ACC) complex. First, biotin carboxylase catalyzes the carboxylation of biotin on its carrier protein (BCCP) and then the CO(2) group is transferred by the carboxyltransferase to acetyl-CoA to form malonyl-CoA. The polypeptide is Acetyl-coenzyme A carboxylase carboxyl transferase subunit alpha (Cyanidioschyzon merolae (strain NIES-3377 / 10D) (Unicellular red alga)).